The following is a 185-amino-acid chain: Celestoxin (185 aa).

An N-terminal signal peptide occupies residues 1–20 (MKFIAAVLLVALLCPKDSTS). Residues 21–148 (LASRLSGLLG…GLPVALPVSV (128 aa)) constitute a propeptide that is removed on maturation.

In terms of tissue distribution, expressed by the mandibular venom gland.

Its subcellular location is the secreted. Functionally, has a hypotensive activity. The sequence is that of Celestoxin from Caribicus warreni (Haitian giant galliwasp).